Consider the following 350-residue polypeptide: MLPRLGCVLFCSLVVLLLSCLLLLKERIPAGSSKAHQQFLALPRSHHSQCSPNLTVVNTSLSLPSRHRLFLTYRHCRNFSILLEPSECARDTFLLLVIKSQPAHIEQRSAIRSTWGRAGSWARGRQLKLVFLLGVAGPVPPAQLLVYESWQFDDILQWDFAEDFFNLTLKELHVQRWIAAACTQAHFILKGDDDVFIHVPNVLEFLEGWDPAQDFLVGDVIRLARPNRNTKVKYFIPFSMYRARHYPPYAGGGGYVMSQATVRHLHMAMEEAELFPIDDVFVGMCLRKLGVTPIHHAGFKTFGIQQPLNPRDPCLYKGLLLVHRLSPLEMWTMWALVTDERLKCAATHKP.

The Cytoplasmic segment spans residues 1 to 4 (MLPR). Residues 5–25 (LGCVLFCSLVVLLLSCLLLLK) form a helical; Signal-anchor for type II membrane protein membrane-spanning segment. Over 26 to 350 (ERIPAGSSKA…RLKCAATHKP (325 aa)) the chain is Lumenal. 2 N-linked (GlcNAc...) asparagine glycosylation sites follow: Asn53 and Asn166.

This sequence belongs to the glycosyltransferase 31 family.

It is found in the golgi apparatus membrane. The enzyme catalyses a beta-D-galactosyl-(1-&gt;4)-N-acetyl-beta-D-glucosaminyl derivative + UDP-N-acetyl-alpha-D-glucosamine = an N-acetyl-beta-D-glucosaminyl-(1-&gt;3)-beta-D-galactosyl-(1-&gt;4)-N-acetyl-beta-D-glucosaminyl derivative + UDP + H(+). Its pathway is protein modification; protein glycosylation. Functionally, beta-1,3-N-acetylglucosaminyltransferase involved in the synthesis of poly-N-acetyllactosamine. Has activity for type 2 oligosaccharides. This chain is N-acetyllactosaminide beta-1,3-N-acetylglucosaminyltransferase 4 (B3gnt4), found in Mus musculus (Mouse).